We begin with the raw amino-acid sequence, 120 residues long: Large ribosomal subunit protein uL18 (120 aa).

This sequence belongs to the universal ribosomal protein uL18 family. Part of the 50S ribosomal subunit; part of the 5S rRNA/L5/L18/L25 subcomplex. Contacts the 5S and 23S rRNAs.

Its function is as follows. This is one of the proteins that bind and probably mediate the attachment of the 5S RNA into the large ribosomal subunit, where it forms part of the central protuberance. The protein is Large ribosomal subunit protein uL18 of Bacillus licheniformis (strain ATCC 14580 / DSM 13 / JCM 2505 / CCUG 7422 / NBRC 12200 / NCIMB 9375 / NCTC 10341 / NRRL NRS-1264 / Gibson 46).